We begin with the raw amino-acid sequence, 244 residues long: Thiol S-methyltransferase TMT1B (244 aa).

The signal sequence occupies residues 1 to 23 (MDILVPLLQLLVLLLTLPLHLMA).

Belongs to the methyltransferase superfamily. Expressed in the liver.

Its subcellular location is the endoplasmic reticulum membrane. The protein resides in the lipid droplet. The protein localises to the microsome. It is found in the cytoplasm. It localises to the cytosol. The enzyme catalyses a thiol + S-adenosyl-L-methionine = a methyl thioether + S-adenosyl-L-homocysteine + H(+). In terms of biological role, thiol S-methyltransferase that catalyzes the transfer of a methyl group from S-adenosyl-L-methionine to alkyl and phenolic thiol-containing acceptor substrates. Together with TMT1B accounts for most of S-thiol methylation activity in the endoplasmic reticulum of hepatocytes. Selectively methylates S-centered nucleophiles from metabolites such as hydrogen sulfide and dithiothreitol. The sequence is that of Thiol S-methyltransferase TMT1B from Homo sapiens (Human).